A 317-amino-acid polypeptide reads, in one-letter code: Acetyl-coenzyme A carboxylase carboxyl transferase subunit beta (317 aa).

A disordered region spans residues 1–28 (MANNMTDTMTKPDINNDSTSLQQNGNKA). The 263-residue stretch at 55 to 317 (PSTKCSSCHS…LCSVPNVDVQ (263 aa)) folds into the CoA carboxyltransferase N-terminal domain. C59, C62, C78, and C81 together coordinate Zn(2+). Residues 59 to 81 (CSSCHSIITNTALIFNCYVCPHC) form a C4-type zinc finger.

The protein belongs to the AccD/PCCB family. As to quaternary structure, acetyl-CoA carboxylase is a heterohexamer composed of biotin carboxyl carrier protein (AccB), biotin carboxylase (AccC) and two subunits each of ACCase subunit alpha (AccA) and ACCase subunit beta (AccD). Zn(2+) serves as cofactor.

Its subcellular location is the cytoplasm. The enzyme catalyses N(6)-carboxybiotinyl-L-lysyl-[protein] + acetyl-CoA = N(6)-biotinyl-L-lysyl-[protein] + malonyl-CoA. It functions in the pathway lipid metabolism; malonyl-CoA biosynthesis; malonyl-CoA from acetyl-CoA: step 1/1. Functionally, component of the acetyl coenzyme A carboxylase (ACC) complex. Biotin carboxylase (BC) catalyzes the carboxylation of biotin on its carrier protein (BCCP) and then the CO(2) group is transferred by the transcarboxylase to acetyl-CoA to form malonyl-CoA. The chain is Acetyl-coenzyme A carboxylase carboxyl transferase subunit beta from Psychrobacter cryohalolentis (strain ATCC BAA-1226 / DSM 17306 / VKM B-2378 / K5).